The primary structure comprises 222 residues: Peroxisomal membrane protein 11-4 (222 aa).

At 1–81 (MSAGDTLDKL…LNGLRRAPGE (81 aa)) the chain is on the cytoplasmic side. Residues 82-102 (FGALAVLANAGEMVYFFFDHF) form a helical membrane-spanning segment. Residues 103 to 196 (TWLSRVGVLD…IGIADIEPNP (94 aa)) are Lumenal-facing. The chain crosses the membrane as a helical span at residues 197–217 (FCNHAVTLGISGLVSAWAGWY). At 218–222 (RNWPS) the chain is on the cytoplasmic side.

This sequence belongs to the peroxin-11 family. Expressed in seedlings, shoots, leaf sheaths and flag leaf.

Its subcellular location is the peroxisome membrane. Its function is as follows. Involved in peroxisomal proliferation. The protein is Peroxisomal membrane protein 11-4 (PEX11-4) of Oryza sativa subsp. indica (Rice).